The following is a 137-amino-acid chain: Large ribosomal subunit protein uL16 (137 aa).

Belongs to the universal ribosomal protein uL16 family. In terms of assembly, part of the 50S ribosomal subunit.

Functionally, binds 23S rRNA and is also seen to make contacts with the A and possibly P site tRNAs. This Spiroplasma kunkelii protein is Large ribosomal subunit protein uL16.